The following is a 236-amino-acid chain: Glucosamine-6-phosphate deaminase (236 aa).

D67 (proton acceptor; for enolization step) is an active-site residue. Residue N136 is the For ring-opening step of the active site. The Proton acceptor; for ring-opening step role is filled by H138. E143 acts as the For ring-opening step in catalysis.

This sequence belongs to the glucosamine/galactosamine-6-phosphate isomerase family. NagB subfamily.

It carries out the reaction alpha-D-glucosamine 6-phosphate + H2O = beta-D-fructose 6-phosphate + NH4(+). It participates in amino-sugar metabolism; N-acetylneuraminate degradation; D-fructose 6-phosphate from N-acetylneuraminate: step 5/5. In terms of biological role, catalyzes the reversible isomerization-deamination of glucosamine 6-phosphate (GlcN6P) to form fructose 6-phosphate (Fru6P) and ammonium ion. This Lachnoclostridium phytofermentans (strain ATCC 700394 / DSM 18823 / ISDg) (Clostridium phytofermentans) protein is Glucosamine-6-phosphate deaminase.